Consider the following 385-residue polypeptide: Lipoyl synthase, mitochondrial (385 aa).

[4Fe-4S] cluster contacts are provided by C107, C112, C118, C137, C141, C144, and S352. The Radical SAM core domain maps to 122–341; it reads KKSEATATIM…RDTALKMGFL (220 aa).

It belongs to the radical SAM superfamily. Lipoyl synthase family. [4Fe-4S] cluster serves as cofactor.

Its subcellular location is the mitochondrion. It carries out the reaction [[Fe-S] cluster scaffold protein carrying a second [4Fe-4S](2+) cluster] + N(6)-octanoyl-L-lysyl-[protein] + 2 oxidized [2Fe-2S]-[ferredoxin] + 2 S-adenosyl-L-methionine + 4 H(+) = [[Fe-S] cluster scaffold protein] + N(6)-[(R)-dihydrolipoyl]-L-lysyl-[protein] + 4 Fe(3+) + 2 hydrogen sulfide + 2 5'-deoxyadenosine + 2 L-methionine + 2 reduced [2Fe-2S]-[ferredoxin]. It functions in the pathway protein modification; protein lipoylation via endogenous pathway; protein N(6)-(lipoyl)lysine from octanoyl-[acyl-carrier-protein]: step 2/2. Functionally, catalyzes the radical-mediated insertion of two sulfur atoms into the C-6 and C-8 positions of the octanoyl moiety bound to the lipoyl domains of lipoate-dependent enzymes, thereby converting the octanoylated domains into lipoylated derivatives. The protein is Lipoyl synthase, mitochondrial of Meyerozyma guilliermondii (strain ATCC 6260 / CBS 566 / DSM 6381 / JCM 1539 / NBRC 10279 / NRRL Y-324) (Yeast).